The primary structure comprises 296 residues: MTNLNKKVRVGIIGSGNIGTDLLIKTMRSESLTCTIFAGRNFNSAGMKRANELGVHISDRGIQAILDDPSICDVVFDATSAQAHIEHWRELEPLDKTVIDMTPAKVGGFCIPAINAEEILASGNRNINMVTCGGQSSIPIANAISSVHPEFEYIEVASSIASRSAGPATRANLDEYIDTTEKALKQFTGAQRTKAILILNPAVPPIDMQTTIYAKIDRPNIAAIDAAVREMVERLKRYVPGYQLVLPPTLDGNRVVTTVKVMGNGDYLPQYAGNLDIINCAAIAVTEMISSLRYGK.

Residue 15–18 participates in NAD(+) binding; that stretch reads SGNI. Cys132 (acyl-thioester intermediate) is an active-site residue. NAD(+) is bound by residues 164–172 and Asn274; that span reads SAGPATRAN.

This sequence belongs to the acetaldehyde dehydrogenase family. Interacts with MhpE.

The catalysed reaction is acetaldehyde + NAD(+) + CoA = acetyl-CoA + NADH + H(+). It functions in the pathway aromatic compound metabolism; 3-phenylpropanoate degradation. Catalyzes the conversion of acetaldehyde to acetyl-CoA, using NAD(+) and coenzyme A. Is the final enzyme in the meta-cleavage pathway for the degradation of aromatic compounds. This is Acetaldehyde dehydrogenase from Pectobacterium atrosepticum (strain SCRI 1043 / ATCC BAA-672) (Erwinia carotovora subsp. atroseptica).